Reading from the N-terminus, the 290-residue chain is 33 kDa chaperonin (290 aa).

2 disulfide bridges follow: Cys236-Cys238 and Cys269-Cys272.

The protein belongs to the HSP33 family. Post-translationally, under oxidizing conditions two disulfide bonds are formed involving the reactive cysteines. Under reducing conditions zinc is bound to the reactive cysteines and the protein is inactive.

The protein resides in the cytoplasm. Functionally, redox regulated molecular chaperone. Protects both thermally unfolding and oxidatively damaged proteins from irreversible aggregation. Plays an important role in the bacterial defense system toward oxidative stress. The chain is 33 kDa chaperonin from Acholeplasma laidlawii (strain PG-8A).